A 389-amino-acid chain; its full sequence is 1-acyl-sn-glycerol-3-phosphate acyltransferase 2 (389 aa).

Residues 2-22 (VIAAAVIVPLGLLFFISGLAV) form a helical membrane-spanning segment. Residues 91-96 (HRSDID) carry the HXXXXD motif motif. The next 2 membrane-spanning stretches (helical) occupy residues 305–325 (LAVV…FLHW) and 333–353 (KGIT…QILI). The disordered stretch occupies residues 357 to 389 (QSERSTPAKVVPAKPKDNHHPESSSQTETEKEK). Residues 370 to 389 (KPKDNHHPESSSQTETEKEK) are compositionally biased toward basic and acidic residues.

It belongs to the 1-acyl-sn-glycerol-3-phosphate acyltransferase family. As to quaternary structure, interacts with GPAT9 and DGAT1. As to expression, present in roots, leaves, stems, floral buds and siliques (at protein level). Widely expressed. In contrast to LPAT1, it is not expressed at higher level in leaves.

It is found in the endoplasmic reticulum membrane. The enzyme catalyses a 1-acyl-sn-glycero-3-phosphate + an acyl-CoA = a 1,2-diacyl-sn-glycero-3-phosphate + CoA. Its pathway is phospholipid metabolism; CDP-diacylglycerol biosynthesis; CDP-diacylglycerol from sn-glycerol 3-phosphate: step 2/3. Its function is as follows. Converts lysophosphatidic acid (LPA) into phosphatidic acid by incorporating acyl moiety at the 2 position. Has preference for C-18-CoA substrates compared to C-16-CoA substrates. Required for female but not male gametophyte development. The protein is 1-acyl-sn-glycerol-3-phosphate acyltransferase 2 (LPAT2) of Arabidopsis thaliana (Mouse-ear cress).